Consider the following 328-residue polypeptide: B3 domain-containing protein At5g60140 (328 aa).

A DNA-binding region (TF-B3) is located at residues 13–109 (SKFFKPYLPS…FFNFSIFDHE (97 aa)). The disordered stretch occupies residues 145 to 221 (LNSDDSDDSD…EDEDDLEDED (77 aa)). 2 stretches are compositionally biased toward acidic residues: residues 148–182 (DDSDDSDNDYSVEDDNVAEDDDGLEDEVDVEAEDG) and 190–221 (GLEDEDDDEAEDGYDAKDDDGLEDEDDLEDED).

The protein resides in the nucleus. This is B3 domain-containing protein At5g60140 from Arabidopsis thaliana (Mouse-ear cress).